A 413-amino-acid chain; its full sequence is L-cysteine:1D-myo-inositol 2-amino-2-deoxy-alpha-D-glucopyranoside ligase (413 aa).

The interval 1-21 is disordered; sequence MQSWSDTALPSVPGQGPPLRL. Cys43 contacts Zn(2+). L-cysteinyl-5'-AMP is bound by residues 43–46, Thr58, and 81–83; these read CGIT and NVT. The 'HIGH' region signature appears at 45-55; it reads ITPYDATHLGH. The short motif at 187–192 is the 'ERGGDP' region element; sequence ERGGDP. Residue Trp227 coordinates L-cysteinyl-5'-AMP. Zn(2+) is bound at residue Cys231. 249–251 is a binding site for L-cysteinyl-5'-AMP; sequence GSD. A Zn(2+)-binding site is contributed by His256. Ile283 contacts L-cysteinyl-5'-AMP. The short motif at 289–293 is the 'KMSKS' region element; that stretch reads KMSKS.

It belongs to the class-I aminoacyl-tRNA synthetase family. MshC subfamily. Monomer. Zn(2+) serves as cofactor.

It catalyses the reaction 1D-myo-inositol 2-amino-2-deoxy-alpha-D-glucopyranoside + L-cysteine + ATP = 1D-myo-inositol 2-(L-cysteinylamino)-2-deoxy-alpha-D-glucopyranoside + AMP + diphosphate + H(+). Its function is as follows. Catalyzes the ATP-dependent condensation of GlcN-Ins and L-cysteine to form L-Cys-GlcN-Ins. This chain is L-cysteine:1D-myo-inositol 2-amino-2-deoxy-alpha-D-glucopyranoside ligase, found in Rhodococcus erythropolis (strain PR4 / NBRC 100887).